Here is a 542-residue protein sequence, read N- to C-terminus: Glucans biosynthesis protein G (542 aa).

The first 34 residues, 1–34 (MVSLLRCPSSKPYSSLICSLTLGAVVALSGVAYA), serve as a signal peptide directing secretion.

This sequence belongs to the OpgD/OpgG family.

It localises to the periplasm. It participates in glycan metabolism; osmoregulated periplasmic glucan (OPG) biosynthesis. Involved in the biosynthesis of osmoregulated periplasmic glucans (OPGs). This chain is Glucans biosynthesis protein G, found in Shewanella baltica (strain OS155 / ATCC BAA-1091).